The chain runs to 569 residues: Urease subunit alpha (569 aa).

Residues 131-569 enclose the Urease domain; the sequence is GAIDSHIHFI…LPLAQRYLLL (439 aa). Ni(2+) contacts are provided by His136, His138, and Lys219. Lys219 carries the N6-carboxylysine modification. His221 is a binding site for substrate. 2 residues coordinate Ni(2+): His248 and His274. His322 (proton donor) is an active-site residue. Ni(2+) is bound at residue Asp362.

This sequence belongs to the metallo-dependent hydrolases superfamily. Urease alpha subunit family. As to quaternary structure, heterotrimer of UreA (gamma), UreB (beta) and UreC (alpha) subunits. Three heterotrimers associate to form the active enzyme. Ni cation is required as a cofactor. Post-translationally, carboxylation allows a single lysine to coordinate two nickel ions.

Its subcellular location is the cytoplasm. The enzyme catalyses urea + 2 H2O + H(+) = hydrogencarbonate + 2 NH4(+). Its pathway is nitrogen metabolism; urea degradation; CO(2) and NH(3) from urea (urease route): step 1/1. In Prochlorococcus marinus (strain NATL1A), this protein is Urease subunit alpha.